Reading from the N-terminus, the 503-residue chain is Aminoaldehyde dehydrogenase 1, peroxisomal (503 aa).

Residues N27, I28, D99, and L189 each coordinate Na(+). 238–245 (GSSATGSK) lines the NAD(+) pocket. E260 serves as the catalytic Proton acceptor. NAD(+) is bound by residues C294 and E393. The active-site Nucleophile is C294. The Microbody targeting signal signature appears at 501 to 503 (SKL).

The protein belongs to the aldehyde dehydrogenase family. In terms of assembly, forms homodimers.

It is found in the peroxisome. The catalysed reaction is 3-aminopropanal + NAD(+) + H2O = beta-alanine + NADH + 2 H(+). The enzyme catalyses 4-aminobutanal + NAD(+) + H2O = 4-aminobutanoate + NADH + 2 H(+). It catalyses the reaction 4-guanidinobutanal + NAD(+) + H2O = 4-guanidinobutanoate + NADH + 2 H(+). It participates in amine and polyamine biosynthesis; betaine biosynthesis via choline pathway; betaine from betaine aldehyde: step 1/1. Dehydrogenase that catalyzes the oxidation of several aminoaldehydes. Metabolizes and detoxifies aldehyde products of polyamine degradation to non-toxic amino acids. Catalyzes the oxidation of 3-aminopropanal to beta-alanine. Catalyzes the oxidation of 4-aminobutanal to 4-aminobutanoate. Catalyzes the oxidation of 4-guanidinobutanal to 4-guanidinobutanoate. In Pisum sativum (Garden pea), this protein is Aminoaldehyde dehydrogenase 1, peroxisomal.